The chain runs to 113 residues: Endoribonuclease SymE (113 aa).

Residues 29 to 74 (SRYPDYSRIPAITLKGQWLEAAGFATGTAVDVKVMEGCIVLTAQPP) enclose the SpoVT-AbrB domain.

This sequence belongs to the SymE family.

It is found in the cytoplasm. Involved in the degradation and recycling of damaged RNA. It is itself a target for degradation by the ATP-dependent protease Lon. The chain is Endoribonuclease SymE from Escherichia coli O6:K15:H31 (strain 536 / UPEC).